The sequence spans 378 residues: tRNA-specific 2-thiouridylase MnmA (378 aa).

ATP-binding positions include A27 to S34 and L53. C121 acts as the Nucleophile in catalysis. Cysteines 121 and 218 form a disulfide. G145 serves as a coordination point for ATP. The interval R168 to Q170 is interaction with tRNA. The active-site Cysteine persulfide intermediate is C218.

The protein belongs to the MnmA/TRMU family.

It is found in the cytoplasm. It carries out the reaction S-sulfanyl-L-cysteinyl-[protein] + uridine(34) in tRNA + AH2 + ATP = 2-thiouridine(34) in tRNA + L-cysteinyl-[protein] + A + AMP + diphosphate + H(+). Its function is as follows. Catalyzes the 2-thiolation of uridine at the wobble position (U34) of tRNA, leading to the formation of s(2)U34. This is tRNA-specific 2-thiouridylase MnmA from Rhizorhabdus wittichii (strain DSM 6014 / CCUG 31198 / JCM 15750 / NBRC 105917 / EY 4224 / RW1) (Sphingomonas wittichii).